The chain runs to 151 residues: 3-dehydroquinate dehydratase (151 aa).

The active-site Proton acceptor is the tyrosine 24. Substrate is bound by residues asparagine 76, histidine 82, and aspartate 89. The active-site Proton donor is histidine 102. Substrate-binding positions include 103–104 (LS) and arginine 113.

It belongs to the type-II 3-dehydroquinase family. In terms of assembly, homododecamer.

The catalysed reaction is 3-dehydroquinate = 3-dehydroshikimate + H2O. It participates in metabolic intermediate biosynthesis; chorismate biosynthesis; chorismate from D-erythrose 4-phosphate and phosphoenolpyruvate: step 3/7. Catalyzes a trans-dehydration via an enolate intermediate. This is 3-dehydroquinate dehydratase from Acinetobacter baumannii (strain AB307-0294).